The sequence spans 89 residues: Cell division protein FtsB (89 aa).

The Cytoplasmic portion of the chain corresponds to 1–3; sequence MRP. A helical membrane pass occupies residues 4-21; the sequence is IIAILIALFILLQYQLWF. The Periplasmic portion of the chain corresponds to 22-89; sequence AAGGIVSVHH…KNEVFYQIVK (68 aa). Residues 29–62 adopt a coiled-coil conformation; the sequence is VHHLNENINHQIMENQKLKDRNTALLADIDDLKH.

It belongs to the FtsB family. As to quaternary structure, part of a complex composed of FtsB, FtsL and FtsQ.

It is found in the cell inner membrane. Functionally, essential cell division protein. May link together the upstream cell division proteins, which are predominantly cytoplasmic, with the downstream cell division proteins, which are predominantly periplasmic. The protein is Cell division protein FtsB of Coxiella burnetii (strain RSA 493 / Nine Mile phase I).